Here is a 292-residue protein sequence, read N- to C-terminus: IGIGEFGEVCSGRLKMPGKREICVAIKTLKAGYTDKQRRDFLSEASIMGQFDHPNIIRLEGVVTKCKPVMIITEYMENGSLDAFLRKNDGRFTVIQLVGILRGIASGMKYLSDMSYVHRDLAARNILVNSNLVCKVSDFGMSRVLEEDPDAAYTTREITGTYQSQGGKIPIRWTAPEAITYRKFTSASDVWSYGIVMWEVMSYGERPYWDMSNQDVIKAIEEGYRLPPPMDCPVSLHQLMLDCWQKERAERPKFSQIVNMLDKLIRNPNSLKRTGGEIARPNTTLLEPSSPE.

ATP-binding positions include 1-9 and Lys27; that span reads IGIGEFGEV. The region spanning 1-265 is the Protein kinase domain; that stretch reads IGIGEFGEVC…QIVNMLDKLI (265 aa). The Proton acceptor role is filled by Asp120. Residue Tyr153 is modified to Phosphotyrosine; by autocatalysis.

This sequence belongs to the protein kinase superfamily. Tyr protein kinase family. Ephrin receptor subfamily. Widely expressed in the developing nervous system.

The protein localises to the cell membrane. The protein resides in the early endosome. It catalyses the reaction L-tyrosyl-[protein] + ATP = O-phospho-L-tyrosyl-[protein] + ADP + H(+). Its function is as follows. Receptor tyrosine kinase which binds membrane-bound ephrin family ligands residing on adjacent cells, leading to contact-dependent bidirectional signaling into neighboring cells. The signaling pathway downstream of the receptor is referred to as forward signaling while the signaling pathway downstream of the ephrin ligand is referred to as reverse signaling. Highly promiscuous, it has the unique property among Eph receptors to bind and to be physiologically activated by both GPI-anchored ephrin-A and transmembrane ephrin-B ligands including efna1 and efnb3. Upon activation by ephrin ligands, modulates cell morphology and integrin-dependent cell adhesion through regulation of the Rac, Rap and Rho GTPases activity. Plays an important role in the development of the nervous system controlling different steps of axonal guidance including the establishment of the corticospinal projections. The sequence is that of Ephrin type-A receptor 4a (epha4a) from Danio rerio (Zebrafish).